The chain runs to 377 residues: N-acetyldiaminopimelate deacetylase (377 aa).

Asp69 is a catalytic residue. Catalysis depends on Glu128, which acts as the Proton acceptor.

The protein belongs to the peptidase M20A family. N-acetyldiaminopimelate deacetylase subfamily.

It catalyses the reaction N-acetyl-(2S,6S)-2,6-diaminopimelate + H2O = (2S,6S)-2,6-diaminopimelate + acetate. The protein operates within amino-acid biosynthesis; L-lysine biosynthesis via DAP pathway; LL-2,6-diaminopimelate from (S)-tetrahydrodipicolinate (acetylase route): step 3/3. In terms of biological role, catalyzes the conversion of N-acetyl-diaminopimelate to diaminopimelate and acetate. In Brevibacillus brevis (strain 47 / JCM 6285 / NBRC 100599), this protein is N-acetyldiaminopimelate deacetylase.